The following is a 559-amino-acid chain: MKQKITDYLDEIYGGTFTATHLQKLVTRLESAKRLITQRRKKHWDESDVVLITYADQFHSNDLKPLPTFNQFYHQWLQSIFSHVHLLPFYPWSSDDGFSVIDYHQVASEAGEWQDIQQLGECSHLMFDFVCNHMSAKSEWFKNYLQQHPGFEDFFIAVDPQTDLSAVTRPRALPLLTPFQMRDHSTRHLWTTFSDDQIDLNYRSPEVLLAMVDVLLCYLAKGAEYVRLDAVGFMWKEPGTSCIHLEKTHLIIKLLRSIIDNVAPGTVIITETNVPHKDNIAYFGAGDDEAHMVYQFSLPPLVLHAVQKQNVEALCAWAQNLTLPSSNTTWFNFLASHDGIGLNPLRGLLPESEILELVEALQQEGALVNWKNNPDGTRSPYEINVTYMDALSRRESSDEERCARFILAHAILLSFPGVPAIYIQSILGSRNDYAGVEKLGYNRAINRKKYHSKEITRELNDEATLRHAVYHELSRLITLRRSHNEFHPDNNFTIDTINSSVMRIPRSNADGNCLTGLFNVSKNIQHVNITNLHGRDLISEVDILGNEITLRPWQVMWIK.

Aspartate 229 functions as the Nucleophile in the catalytic mechanism.

This sequence belongs to the glycosyl hydrolase 13 family. Glucosylglycerate phosphorylase subfamily.

It carries out the reaction (2R)-2-O-(alpha-D-glucopyranosyl)-glycerate + phosphate = (R)-glycerate + alpha-D-glucose 1-phosphate. Its function is as follows. Catalyzes the reversible phosphorolysis of glucosylglycerate into alpha-D-glucose 1-phosphate (Glc1P) and D-glycerate (also called (R)-glycerate). May be a regulator of intracellular levels of glucosylglycerate, a compatible solute that primarily protects organisms facing salt stress and very specific nutritional constraints. Cannot catalyze the phosphorolysis of sucrose. Does not act on other sugars such as alpha-D-galactose 1-phosphate, alpha-D-mannose 1-phosphate or beta-D-glucose 1-phosphate; in vitro D-erythronate can substitute for D-glycerate with a much lower efficiency. This is Glucosylglycerate phosphorylase (ycjM) from Escherichia coli (strain K12).